Here is a 44-residue protein sequence, read N- to C-terminus: Phosphatase RapE inhibitor (44 aa).

2 propeptides span residues 1 to 30 and 36 to 44; these read MKSK…MKEA and LAPTHEFLV.

Belongs to the Phr family. Post-translationally, contains a predicted signal peptide cleavage site in the N-terminal region, however the propeptide is probably only subject to processing events at the ends of the mature peptide.

Its subcellular location is the secreted. It localises to the cytoplasm. Its function is as follows. Signaling molecule involved in the regulation of sporulation. Secreted during production, but the mature peptide acts intracellularly, indicating that it needs to be imported into the cell to function. Inhibitor of the RapE phosphatase activity. Does not inhibit the phosphatase activity of RapA and RapB. Probably plays a dispensable role in the overall context of sporulation initiation. The polypeptide is Phosphatase RapE inhibitor (phrE) (Bacillus subtilis (strain 168)).